We begin with the raw amino-acid sequence, 128 residues long: L-ectoine synthase (128 aa).

This sequence belongs to the ectoine synthase family.

The catalysed reaction is (2S)-4-acetamido-2-aminobutanoate = L-ectoine + H2O. It functions in the pathway amine and polyamine biosynthesis; ectoine biosynthesis; L-ectoine from L-aspartate 4-semialdehyde: step 3/3. Catalyzes the circularization of gamma-N-acetyl-alpha,gamma-diaminobutyric acid (ADABA) to ectoine (1,4,5,6-tetrahydro-2-methyl-4-pyrimidine carboxylic acid), which is an excellent osmoprotectant. The protein is L-ectoine synthase of Aliivibrio fischeri (strain ATCC 700601 / ES114) (Vibrio fischeri).